Here is a 404-residue protein sequence, read N- to C-terminus: Probable tRNA sulfurtransferase (404 aa).

The THUMP domain maps to 60–165; the sequence is QPVVEALKLV…DEAAYISYEE (106 aa). ATP contacts are provided by residues 183–184, 208–209, arginine 265, glycine 287, and glutamine 296; these read ML and HF.

Belongs to the ThiI family.

The protein resides in the cytoplasm. The catalysed reaction is [ThiI sulfur-carrier protein]-S-sulfanyl-L-cysteine + a uridine in tRNA + 2 reduced [2Fe-2S]-[ferredoxin] + ATP + H(+) = [ThiI sulfur-carrier protein]-L-cysteine + a 4-thiouridine in tRNA + 2 oxidized [2Fe-2S]-[ferredoxin] + AMP + diphosphate. The enzyme catalyses [ThiS sulfur-carrier protein]-C-terminal Gly-Gly-AMP + S-sulfanyl-L-cysteinyl-[cysteine desulfurase] + AH2 = [ThiS sulfur-carrier protein]-C-terminal-Gly-aminoethanethioate + L-cysteinyl-[cysteine desulfurase] + A + AMP + 2 H(+). It functions in the pathway cofactor biosynthesis; thiamine diphosphate biosynthesis. Its function is as follows. Catalyzes the ATP-dependent transfer of a sulfur to tRNA to produce 4-thiouridine in position 8 of tRNAs, which functions as a near-UV photosensor. Also catalyzes the transfer of sulfur to the sulfur carrier protein ThiS, forming ThiS-thiocarboxylate. This is a step in the synthesis of thiazole, in the thiamine biosynthesis pathway. The sulfur is donated as persulfide by IscS. This Streptococcus pyogenes serotype M5 (strain Manfredo) protein is Probable tRNA sulfurtransferase.